A 362-amino-acid chain; its full sequence is RING-H2 finger protein ATL52 (362 aa).

A helical transmembrane segment spans residues L58 to I78. The segment at C142–R184 adopts an RING-type; atypical zinc-finger fold. Disordered regions lie at residues D252–S271 and E296–G333. The span at Q309–G319 shows a compositional bias: basic and acidic residues.

This sequence belongs to the RING-type zinc finger family. ATL subfamily. In terms of tissue distribution, expressed in flowers.

The protein resides in the membrane. It carries out the reaction S-ubiquitinyl-[E2 ubiquitin-conjugating enzyme]-L-cysteine + [acceptor protein]-L-lysine = [E2 ubiquitin-conjugating enzyme]-L-cysteine + N(6)-ubiquitinyl-[acceptor protein]-L-lysine.. The protein operates within protein modification; protein ubiquitination. The polypeptide is RING-H2 finger protein ATL52 (ATL52) (Arabidopsis thaliana (Mouse-ear cress)).